A 113-amino-acid polypeptide reads, in one-letter code: U11-theraphotoxin-Hhn1a (113 aa).

Positions 1 to 21 are cleaved as a signal peptide; that stretch reads MNTVRVTFLLVFVLAVSLGQA. Positions 22–74 are excised as a propeptide; it reads DKDENRMEMQEKTEQGKSYLDFAENLLLQKLEELVAKLLEEDSEESRNSRQKR. 3 disulfide bridges follow: cysteine 75/cysteine 90, cysteine 82/cysteine 95, and cysteine 89/cysteine 110.

It belongs to the neurotoxin 14 (magi-1) family. 01 (HNTX-16) subfamily. Expressed by the venom gland.

The protein localises to the secreted. In terms of biological role, probable ion channel inhibitor. This is U11-theraphotoxin-Hhn1a from Cyriopagopus hainanus (Chinese bird spider).